A 220-amino-acid chain; its full sequence is N-(5'-phosphoribosyl)anthranilate isomerase (220 aa).

The protein belongs to the TrpF family.

It catalyses the reaction N-(5-phospho-beta-D-ribosyl)anthranilate = 1-(2-carboxyphenylamino)-1-deoxy-D-ribulose 5-phosphate. It functions in the pathway amino-acid biosynthesis; L-tryptophan biosynthesis; L-tryptophan from chorismate: step 3/5. This is N-(5'-phosphoribosyl)anthranilate isomerase from Leptothrix cholodnii (strain ATCC 51168 / LMG 8142 / SP-6) (Leptothrix discophora (strain SP-6)).